A 413-amino-acid chain; its full sequence is Falstatin (413 aa).

Positions 1-21 are cleaved as a signal peptide; sequence MNLLVFFCFFLLSCIVHLSRC. Residues 284–294 carry the BC loop; binds and inhibits the active site cavity of cysteine proteases motif; the sequence is LDSVNGNGFVW. Polar residues-rich tracts occupy residues 325–339 and 346–360; these read ISVTNPVPIPKNSNT and NNKQDGSQNNTTTNH. Residues 325–367 form a disordered region; the sequence is ISVTNPVPIPKNSNTNKDDSINNKQDGSQNNTTTNHFPKPREQ.

This sequence belongs to the protease inhibitor I71 family. As to quaternary structure, oligomer; probably composed of 10 monomers. In terms of processing, proteolytically cleaved.

It localises to the secreted. The protein resides in the cytoplasmic vesicle. The protein localises to the secretory vesicle. Its subcellular location is the microneme. It is found in the parasitophorous vacuole lumen. It localises to the host cytoplasm. Its function is as follows. Cysteine protease inhibitor. Inhibits cysteine protease falcipains FP2 and FP3. Required for the invasion of host erythrocytes by merozoites. In the mosquito vector, essential for the gliding motility of hemocoel sporozoites and, therefore, for salivary gland invasion and the subsequent transmission from the mosquito to the mammalian host. Required for the invasion of host hepatocytes. During the liver stage, may prevent host hepatocyte cell death likely by inhibiting host cysteine proteases. This Plasmodium falciparum (isolate 3D7) protein is Falstatin.